The chain runs to 293 residues: Proximal tail tube connector protein (293 aa).

Disordered stretches follow at residues 106-166 and 192-240; these read VGVK…FKRD and QIEE…NDKL. Residues 112–126 are compositionally biased toward basic and acidic residues; that stretch reads TKNDTDRNDNRDVKQ. The segment covering 127–160 has biased composition (polar residues); that stretch reads DLTSNGTSSTDAKQNDTSKTTGNEKSSGSGSITD. A compositionally biased stretch (basic and acidic residues) spans 193–205; the sequence is IEEHNENKKRDTK. The segment covering 206-231 has biased composition (low complexity); that stretch reads TSNTTDTTSNTTGTSTLDSDSKTSNK.

This sequence belongs to the phi29likevirus proximal tail tube connector protein family.

It localises to the virion. Its function is as follows. Forms the proximal part of the tail tube. The sequence is that of Proximal tail tube connector protein (11) from Bacillus phage PZA (Bacteriophage PZA).